Reading from the N-terminus, the 547-residue chain is Cytochrome P450 monooxygenase 81 (547 aa).

Transmembrane regions (helical) follow at residues 6-23 (IPTQ…LFLL) and 106-124 (AFFA…ATAG). Cys-483 provides a ligand contact to heme. N-linked (GlcNAc...) asparagine glycans are attached at residues Asn-503 and Asn-516.

This sequence belongs to the cytochrome P450 family. Heme is required as a cofactor.

It localises to the membrane. It functions in the pathway secondary metabolite biosynthesis. Its function is as follows. Cytochrome P450 monooxygenase that is able to use dehydroabietic acid as a substrate for oxidation. This chain is Cytochrome P450 monooxygenase 81, found in Postia placenta (strain ATCC 44394 / Madison 698-R) (Brown rot fungus).